The chain runs to 96 residues: MEPYILQDEELNELVVKIPGWEIKSKQIQREFNFANFIEAFAFMTKVALICEKYNHHPNWENVYAKVIIKLNTHDLGGITNLDQTLASEINKIFDQ.

This sequence belongs to the pterin-4-alpha-carbinolamine dehydratase family.

The enzyme catalyses (4aS,6R)-4a-hydroxy-L-erythro-5,6,7,8-tetrahydrobiopterin = (6R)-L-erythro-6,7-dihydrobiopterin + H2O. In Prochlorococcus marinus (strain MIT 9301), this protein is Putative pterin-4-alpha-carbinolamine dehydratase.